The sequence spans 475 residues: Sulfate adenylyltransferase subunit 1 (475 aa).

In terms of domain architecture, tr-type G spans 25–239 (KSLLRFLTCG…EVLETVEIQR (215 aa)). A G1 region spans residues 34-41 (GSVDDGKS). Residue 34-41 (GSVDDGKS) coordinates GTP. Residues 92 to 96 (GITID) are G2. Residues 113–116 (DTPG) are G3. GTP is bound by residues 113–117 (DTPGH) and 168–171 (NKMD). A G4 region spans residues 168-171 (NKMD). The G5 stretch occupies residues 206-208 (SAL).

The protein belongs to the TRAFAC class translation factor GTPase superfamily. Classic translation factor GTPase family. CysN/NodQ subfamily. As to quaternary structure, heterodimer composed of CysD, the smaller subunit, and CysN.

It carries out the reaction sulfate + ATP + H(+) = adenosine 5'-phosphosulfate + diphosphate. It participates in sulfur metabolism; hydrogen sulfide biosynthesis; sulfite from sulfate: step 1/3. Its function is as follows. With CysD forms the ATP sulfurylase (ATPS) that catalyzes the adenylation of sulfate producing adenosine 5'-phosphosulfate (APS) and diphosphate, the first enzymatic step in sulfur assimilation pathway. APS synthesis involves the formation of a high-energy phosphoric-sulfuric acid anhydride bond driven by GTP hydrolysis by CysN coupled to ATP hydrolysis by CysD. The protein is Sulfate adenylyltransferase subunit 1 of Escherichia coli (strain SE11).